The primary structure comprises 580 residues: UPF0329 protein ECU06_0080 (580 aa).

Residues 308–330 (RQKRREREMEKSMKELLRDEEKA) are compositionally biased toward basic and acidic residues. The tract at residues 308 to 384 (RQKRREREME…KTGKKSKGGR (77 aa)) is disordered. Residues 331–340 (KSKKGRKKKS) are compositionally biased toward basic residues. Acidic residues predominate over residues 351–363 (SETEEVEASEEME). The segment covering 372–384 (ARRKTGKKSKGGR) has biased composition (basic residues).

This sequence belongs to the UPF0329 family.

In Encephalitozoon cuniculi (strain GB-M1) (Microsporidian parasite), this protein is UPF0329 protein ECU06_0080.